We begin with the raw amino-acid sequence, 359 residues long: RNA 3'-terminal phosphate cyclase (359 aa).

Residues Q100 and 291-294 (HASD) each bind ATP. The active-site Tele-AMP-histidine intermediate is the H317.

It belongs to the RNA 3'-terminal cyclase family. Type 1 subfamily.

Its subcellular location is the cytoplasm. It catalyses the reaction a 3'-end 3'-phospho-ribonucleotide-RNA + ATP = a 3'-end 2',3'-cyclophospho-ribonucleotide-RNA + AMP + diphosphate. Its function is as follows. Catalyzes the conversion of 3'-phosphate to a 2',3'-cyclic phosphodiester at the end of RNA. The mechanism of action of the enzyme occurs in 3 steps: (A) adenylation of the enzyme by ATP; (B) transfer of adenylate to an RNA-N3'P to produce RNA-N3'PP5'A; (C) and attack of the adjacent 2'-hydroxyl on the 3'-phosphorus in the diester linkage to produce the cyclic end product. The biological role of this enzyme is unknown but it is likely to function in some aspects of cellular RNA processing. In Hyperthermus butylicus (strain DSM 5456 / JCM 9403 / PLM1-5), this protein is RNA 3'-terminal phosphate cyclase.